Here is a 194-residue protein sequence, read N- to C-terminus: uncharacterized protein (194 aa).

This is an uncharacterized protein from Aquifex aeolicus (strain VF5).